The chain runs to 346 residues: Protein RecA (346 aa).

67-74 (GPESSGKT) contributes to the ATP binding site.

Belongs to the RecA family.

It localises to the cytoplasm. Can catalyze the hydrolysis of ATP in the presence of single-stranded DNA, the ATP-dependent uptake of single-stranded DNA by duplex DNA, and the ATP-dependent hybridization of homologous single-stranded DNAs. It interacts with LexA causing its activation and leading to its autocatalytic cleavage. The chain is Protein RecA from Mycobacterium marinum (strain ATCC BAA-535 / M).